The chain runs to 549 residues: SH3 domain-containing protein 21 (549 aa).

Residues 1–56 form a disordered region; sequence MVQSELQLQPRAGRRADASNWGDFGSDKGGLGNTDIPPITPNSQRPPKLSNLTYDS. The segment covering 41–54 has biased composition (polar residues); it reads PNSQRPPKLSNLTY. Positions 65–126 constitute an SH3 domain; that stretch reads SCPETCRVLF…PDNFVIPPPP (62 aa). 2 disordered regions span residues 142-303 and 332-479; these read PIKE…KPAK and FKKE…KSKN. The span at 211 to 220 shows a compositional bias: low complexity; it reads QASQQHSASS. Basic and acidic residues-rich tracts occupy residues 267-280 and 332-342; these read PVPK…KIPA and FKKEPSRDNDQ. Composition is skewed to polar residues over residues 343 to 365 and 439 to 456; these read CQHL…NNIQ and VLPQ…TIQQ. The stretch at 482–510 forms a coiled coil; that stretch reads MDVLESLKEEVGLLRSRLELLELKLEQKM. The segment at 528 to 549 is disordered; that stretch reads QMMQRNRKSFKHAETQTETQTE.

This Mus musculus (Mouse) protein is SH3 domain-containing protein 21 (Sh3d21).